The sequence spans 175 residues: ATP-dependent protease subunit HslV (175 aa).

Thr-2 is an active-site residue. Na(+) contacts are provided by Ala-159, Asp-162, and Thr-165.

It belongs to the peptidase T1B family. HslV subfamily. In terms of assembly, a double ring-shaped homohexamer of HslV is capped on each side by a ring-shaped HslU homohexamer. The assembly of the HslU/HslV complex is dependent on binding of ATP.

The protein localises to the cytoplasm. The enzyme catalyses ATP-dependent cleavage of peptide bonds with broad specificity.. Allosterically activated by HslU binding. Protease subunit of a proteasome-like degradation complex believed to be a general protein degrading machinery. This chain is ATP-dependent protease subunit HslV, found in Ligilactobacillus salivarius (strain UCC118) (Lactobacillus salivarius).